The sequence spans 1167 residues: Non-toxic nonhemagglutinin (1167 aa).

The interval 1–381 (MDIIDNVDIT…PQQIINLIDN (381 aa)) is light chain nLC. Residues 382 to 804 (NNILLIKSYI…LFNSKIQLTI (423 aa)) form an N-heavy chain nHN region. A C-heavy chain nHC region spans residues 805-1167 (KNEKPEYNLL…LNDIYSWTLI (363 aa)).

This sequence belongs to the botulism non-toxic nonhemagglutinin family.

Its function is as follows. Expression of the ptox operon (ntnh-orfX1-orfX2-orfX3-pmp1) in B.thuringiensis kills Anopheles but not Aedes mosquito 3rd instar larvae. The ntnh-pmp1 construct is about half as toxic. This is Non-toxic nonhemagglutinin from Paraclostridium bifermentans (Clostridium bifermentans).